Reading from the N-terminus, the 968-residue chain is RNA polymerase-associated protein RapA (968 aa).

Residues aspartate 164 to asparagine 334 enclose the Helicase ATP-binding domain. Aspartate 177 to threonine 184 serves as a coordination point for ATP. A DEAH box motif is present at residues aspartate 280 to histidine 283. Positions arginine 490 to glycine 662 constitute a Helicase C-terminal domain.

It belongs to the SNF2/RAD54 helicase family. RapA subfamily. In terms of assembly, interacts with the RNAP. Has a higher affinity for the core RNAP than for the holoenzyme. Its ATPase activity is stimulated by binding to RNAP.

In terms of biological role, transcription regulator that activates transcription by stimulating RNA polymerase (RNAP) recycling in case of stress conditions such as supercoiled DNA or high salt concentrations. Probably acts by releasing the RNAP, when it is trapped or immobilized on tightly supercoiled DNA. Does not activate transcription on linear DNA. Probably not involved in DNA repair. The sequence is that of RNA polymerase-associated protein RapA from Escherichia coli O1:K1 / APEC.